The sequence spans 200 residues: 3-isopropylmalate dehydratase small subunit (200 aa).

Belongs to the LeuD family. LeuD type 1 subfamily. In terms of assembly, heterodimer of LeuC and LeuD.

It catalyses the reaction (2R,3S)-3-isopropylmalate = (2S)-2-isopropylmalate. It functions in the pathway amino-acid biosynthesis; L-leucine biosynthesis; L-leucine from 3-methyl-2-oxobutanoate: step 2/4. In terms of biological role, catalyzes the isomerization between 2-isopropylmalate and 3-isopropylmalate, via the formation of 2-isopropylmaleate. This chain is 3-isopropylmalate dehydratase small subunit, found in Yersinia pestis bv. Antiqua (strain Antiqua).